Here is a 64-residue protein sequence, read N- to C-terminus: Alpha-like toxin BmK M2 (64 aa).

Residues 2 to 64 (RDAYIAKPHN…VPIRVPGKCH (63 aa)) enclose the LCN-type CS-alpha/beta domain. Disulfide bonds link Cys-12–Cys-63, Cys-16–Cys-36, Cys-22–Cys-46, and Cys-26–Cys-48.

It belongs to the long (4 C-C) scorpion toxin superfamily. Sodium channel inhibitor family. Alpha subfamily. As to expression, expressed by the venom gland.

The protein localises to the secreted. Its function is as follows. Alpha toxins bind voltage-independently at site-3 of sodium channels (Nav) and inhibit the inactivation of the activated channels, thereby blocking neuronal transmission. This toxin is active against both mammals and insects, and is classified as an alpha-like toxin. The polypeptide is Alpha-like toxin BmK M2 (Olivierus martensii (Manchurian scorpion)).